Consider the following 462-residue polypeptide: Retinoic acid receptor alpha (462 aa).

Residues 1–87 (MASNSSSCPT…PPPLPRIYKP (87 aa)) form a modulating region. The span at 52 to 64 (GYSTPSPATIETQ) shows a compositional bias: polar residues. The interval 52 to 77 (GYSTPSPATIETQSSSSEEIVPSPPS) is disordered. A Phosphoserine; by CDK7 modification is found at Ser77. 2 NR C4-type zinc fingers span residues 88 to 108 (CFVCQDKSSGYHYGVSACEGC) and 124 to 148 (CHRDKNCIINKVTRNRCQYCRLQKC). A DNA-binding region (nuclear receptor) is located at residues 88–153 (CFVCQDKSSG…RLQKCFDVGM (66 aa)). Phosphoserine; by PKB/AKT1 is present on Ser96. The tract at residues 154 to 182 (SKESVRNDRNKKKKEAPKPECSESYTLTP) is hinge. Glycyl lysine isopeptide (Lys-Gly) (interchain with G-Cter in SUMO) cross-links involve residues Lys166 and Lys171. The NR LBD domain occupies 183-417 (EVGELIEKVR…PLIQEMLENS (235 aa)). Ser219 carries the phosphoserine; by PKA modification. Residue Cys235 participates in all-trans-retinoate binding. Residues 254–258 (IADQI) carry the UBR5-degron motif. Ser287 is an all-trans-retinoate binding site. Lys347 carries the post-translational modification N6,N6,N6-trimethyllysine. The residue at position 369 (Ser369) is a Phosphoserine; by PKA and RPS6KA5. Lys399 is covalently cross-linked (Glycyl lysine isopeptide (Lys-Gly) (interchain with G-Cter in SUMO)). The segment at 404–419 (GSMPPLIQEMLENSEG) is required for binding corepressor NCOR1. The 9aaTAD motif lies at 408 to 416 (PLIQEMLEN). Residues 420-462 (LDTLSGQSGGGTRDGGGLAPPPGSCSPSLSPSSHRSSPATQSP) form a disordered region. The segment covering 426–437 (QSGGGTRDGGGL) has biased composition (gly residues). Residues 444 to 462 (CSPSLSPSSHRSSPATQSP) show a composition bias toward low complexity.

The protein belongs to the nuclear hormone receptor family. NR1 subfamily. As to quaternary structure, heterodimer; with RXRA. Binds DNA preferentially as a heterodimer. RXRA serves as enhancer to induce RARA binding to RARE. Interacts with RXRG. Interacts with NCOA3 and NCOA6 coactivators, leading to a strong increase of transcription of target genes. Interacts with NCOA7; the interaction requires ligand-binding. Interacts (via the ligand-binding domain) with PRAME; interaction is direct and ligand (retinoic acid)-dependent. Interacts with PRKAR1A; the interaction negatively regulates RARA transcriptional activity. Interacts with NCOR1; the interaction occurs in the absence of ligand and represses transcriptional activity. Interacts with NCOR2. Interacts with PRMT2. Interacts with LRIF1. Interacts with ASXL1 and NCOA1. Interacts with ACTN4. Interacts with CDK7; the interaction is enhanced by interaction with GTF2H3. Interacts with GTF2H3; the interaction requires prior phosphorylation on Ser-369 which then enhances interaction with CDK7. In a complex with HDAC3, HDAC5 and HDAC7; the HDACs serve as corepressors of RARA, causing its deacetylation and inhibition of RARE DNA element binding; association with HDAC3, HDAC5 and HDAC7 is increased upon oscillatory shear stress. In the absence of hormonal ligand, interacts with TACC1. In terms of processing, phosphorylated on serine and threonine residues. Phosphorylation does not change during cell cycle. Phosphorylation on Ser-77 is crucial for the N-terminal AF1 transcriptional activity. Under stress conditions, MAPK8 enhances phosphorylation on Thr-181, Ser-445 and Ser-461 leading to RARA ubiquitination and degradation. Phosphorylation by AKT1 inhibits the transactivation activity. On retinoic acid stimulation, phosphorylation on Ser-369 by RPS6KA5 promotes interaction with GTF2H3 and the CDK7-mediated phosphorylation of Ser-77. Ubiquitinated by UBR5, leading to its degradation: UBR5 specifically recognizes and binds ligand-bound RARA when it is not associated with coactivators (NCOAs). In presence of NCOAs, the UBR5-degron is not accessible, preventing its ubiquitination and degradation. Post-translationally, sumoylated with SUMO2, mainly on Lys-399 which is also required for SENP6 binding. On all-trans retinoic acid (ATRA) binding, a conformational change may occur that allows sumoylation on two additional site, Lys-166 and Lys-171. Probably desumoylated by SENP6. Sumoylation levels determine nuclear localization and regulate ATRA-mediated transcriptional activity. In terms of processing, acetylated; acetylation is increased upon pulsatile shear stress and decreased upon oscillatory shear stress. As to expression, expressed in Sertoli cells and germ cells.

Its subcellular location is the nucleus. The protein localises to the cytoplasm. Its function is as follows. Receptor for retinoic acid. Retinoic acid receptors bind as heterodimers to their target response elements in response to their ligands, all-trans or 9-cis retinoic acid, and regulate gene expression in various biological processes. The RXR/RAR heterodimers bind to the retinoic acid response elements (RARE) composed of tandem 5'-AGGTCA-3' sites known as DR1-DR5. In the absence of ligand, the RXR-RAR heterodimers associate with a multiprotein complex containing transcription corepressors that induce histone deacetylation, chromatin condensation and transcriptional suppression. On ligand binding, the corepressors dissociate from the receptors and associate with the coactivators leading to transcriptional activation. Formation of heterocomplex with histone deacetylases might lead to inhibition of RARE DNA element binding and to transcriptional repression. Transcriptional activation and RARE DNA element binding might be supported by the transcription factor KLF2. RARA plays an essential role in the regulation of retinoic acid-induced germ cell development during spermatogenesis. Has a role in the survival of early spermatocytes at the beginning prophase of meiosis. In Sertoli cells, may promote the survival and development of early meiotic prophase spermatocytes. In concert with RARG, required for skeletal growth, matrix homeostasis and growth plate function. Together with RXRA, positively regulates microRNA-10a expression, thereby inhibiting the GATA6/VCAM1 signaling response to pulsatile shear stress in vascular endothelial cells. In association with HDAC3, HDAC5 and HDAC7 corepressors, plays a role in the repression of microRNA-10a and thereby promotes the inflammatory response. The chain is Retinoic acid receptor alpha (Rara) from Mus musculus (Mouse).